A 514-amino-acid polypeptide reads, in one-letter code: 2,3-bisphosphoglycerate-independent phosphoglycerate mutase (514 aa).

Residues D13 and S63 each coordinate Mn(2+). S63 serves as the catalytic Phosphoserine intermediate. Substrate is bound by residues H124, 154–155 (RD), R186, R192, 258–261 (RADR), and K332. Residues D399, H403, D440, H441, and H459 each contribute to the Mn(2+) site.

Belongs to the BPG-independent phosphoglycerate mutase family. As to quaternary structure, monomer. The cofactor is Mn(2+).

It carries out the reaction (2R)-2-phosphoglycerate = (2R)-3-phosphoglycerate. It functions in the pathway carbohydrate degradation; glycolysis; pyruvate from D-glyceraldehyde 3-phosphate: step 3/5. In terms of biological role, catalyzes the interconversion of 2-phosphoglycerate and 3-phosphoglycerate. This is 2,3-bisphosphoglycerate-independent phosphoglycerate mutase from Legionella pneumophila subsp. pneumophila (strain Philadelphia 1 / ATCC 33152 / DSM 7513).